The following is a 230-amino-acid chain: 5'-methylthioadenosine/S-adenosylhomocysteine nucleosidase (230 aa).

The Proton acceptor role is filled by Glu12. Residues Gly78, Ile153, and 174–175 each bind substrate; that span reads ME. The active-site Proton donor is Asp198.

Belongs to the PNP/UDP phosphorylase family. MtnN subfamily.

The catalysed reaction is S-adenosyl-L-homocysteine + H2O = S-(5-deoxy-D-ribos-5-yl)-L-homocysteine + adenine. The enzyme catalyses S-methyl-5'-thioadenosine + H2O = 5-(methylsulfanyl)-D-ribose + adenine. It carries out the reaction 5'-deoxyadenosine + H2O = 5-deoxy-D-ribose + adenine. Its pathway is amino-acid biosynthesis; L-methionine biosynthesis via salvage pathway; S-methyl-5-thio-alpha-D-ribose 1-phosphate from S-methyl-5'-thioadenosine (hydrolase route): step 1/2. Its function is as follows. Catalyzes the irreversible cleavage of the glycosidic bond in both 5'-methylthioadenosine (MTA) and S-adenosylhomocysteine (SAH/AdoHcy) to adenine and the corresponding thioribose, 5'-methylthioribose and S-ribosylhomocysteine, respectively. Also cleaves 5'-deoxyadenosine, a toxic by-product of radical S-adenosylmethionine (SAM) enzymes, into 5-deoxyribose and adenine. The protein is 5'-methylthioadenosine/S-adenosylhomocysteine nucleosidase of Shewanella halifaxensis (strain HAW-EB4).